Here is a 476-residue protein sequence, read N- to C-terminus: Glycogen synthase (476 aa).

K15 is a binding site for ADP-alpha-D-glucose.

Belongs to the glycosyltransferase 1 family. Bacterial/plant glycogen synthase subfamily.

It carries out the reaction [(1-&gt;4)-alpha-D-glucosyl](n) + ADP-alpha-D-glucose = [(1-&gt;4)-alpha-D-glucosyl](n+1) + ADP + H(+). The protein operates within glycan biosynthesis; glycogen biosynthesis. In terms of biological role, synthesizes alpha-1,4-glucan chains using ADP-glucose. This Streptococcus mutans serotype c (strain ATCC 700610 / UA159) protein is Glycogen synthase.